The chain runs to 818 residues: Sodium/hydrogen exchanger 1 (818 aa).

Over 1–98 (MLLWSGICGL…FPVLGIDYTH (98 aa)) the chain is Extracellular. Residues 39 to 76 (PSPTASTIRGSEPPRERSIGDVTTAPPELAPESRPVNH) are disordered. Residue Asn75 is glycosylated (N-linked (GlcNAc...) asparagine). A helical transmembrane segment spans residues 99-121 (VRTPFEISLWILLACLMKIGFHV). Topologically, residues 122 to 130 (IPTISSIVP) are cytoplasmic. Residues 131 to 148 (ESCLLIVVGLLVGGLIKA) form a helical membrane-spanning segment. The Extracellular segment spans residues 149-158 (VGETPPFLQS). Residues 159–176 (EVFFLFLLPPIILDAGYF) form a helical membrane-spanning segment. The Cytoplasmic segment spans residues 177 to 186 (LPLRQFTENL). Residues 187 to 215 (GTILIFAVVGTLWNAFFLGGLMYAVCLVG) form a helical membrane-spanning segment. At 216–222 (GEQINNI) the chain is on the extracellular side. A helical membrane pass occupies residues 223–249 (GLLDNLLFGSIISAVDPVAVLAVFEEI). The Cytoplasmic portion of the chain corresponds to 250–252 (HIN). Residues 253 to 283 (ELLHILVFGESLLNDAVTVVLYHLFEEFANY) form a helical membrane-spanning segment. The Extracellular portion of the chain corresponds to 284–287 (DRVG). The chain crosses the membrane as a helical span at residues 288-322 (IVDIVLGFLSFFVVSLGGVFVGVVYGVIAAFTSRF). At 323 to 328 (TSHIRV) the chain is on the cytoplasmic side. Residues 329–341 (IEPLFVFLYSYMA) form a helical membrane-spanning segment. Residues 342–350 (YLSAELFHL) are Extracellular-facing. The helical transmembrane segment at 351–371 (SGIMALIASGVVMRPYVEANI) threads the bilayer. Topologically, residues 372–373 (SH) are cytoplasmic. The helical transmembrane segment at 374 to 404 (KSHTTIKYFLKMWSSVSETLIFIFLGVSTVA) threads the bilayer. The Extracellular segment spans residues 405 to 410 (GSHHWN). Residues 411–438 (WTFVISTLLFCLIARVLGVLGLTWFINK) form a helical membrane-spanning segment. At 439 to 444 (FRIVKL) the chain is on the cytoplasmic side. A helical transmembrane segment spans residues 445–469 (TPKDQFIIAYGGLRGAIAFSLGHLL). Residues 470–475 (DKNHFP) lie on the Extracellular side of the membrane. Residues 476 to 505 (MCDLFLTAIITVIFFTVFVQGMTIRPLVDL) form a helical membrane-spanning segment. Residues 503-545 (VDLLAVKKKQETKRSINEEIHTQFLDHLLTGIEDICGHYGHHH) are interaction with TESC. The Cytoplasmic portion of the chain corresponds to 506–818 (LAVKKKQETK…EGEPFIPKGQ (313 aa)). Residues 509–516 (KKKQETKR) are PI(4,5)P2-binding region. Residues 515–545 (KRSINEEIHTQFLDHLLTGIEDICGHYGHHH) are interaction with CHP2. The tract at residues 540-545 (HYGHHH) is confers pH-dependent PI(4,5)P2 binding. Positions 552-560 (RFNKKYVKK) are PI(4,5)P2-binding region. A phosphoserine mark is found at Ser599 and Ser602. Thr603 is subject to Phosphothreonine. Phosphoserine is present on residues Ser605 and Ser648. An interaction with TESC region spans residues 633–818 (KILRNNLQKT…EGEPFIPKGQ (186 aa)). The tract at residues 633–818 (KILRNNLQKT…EGEPFIPKGQ (186 aa)) is interaction with CALM1. The interval 684–687 (LTVP) is interaction with PPP3CA. Phosphoserine occurs at positions 693, 697, and 703. An interaction with PPP3CA region spans residues 715 to 720 (PVITID). A phosphoserine mark is found at Ser723, Ser726, and Ser729. A disordered region spans residues 739 to 818 (GKVLGLSREP…EGEPFIPKGQ (80 aa)). A phosphothreonine mark is found at Thr752 and Thr782. The span at 785-794 (PSDSPSSQRI) shows a compositional bias: polar residues. Residues Ser788, Ser790, and Ser799 each carry the phosphoserine modification.

Belongs to the monovalent cation:proton antiporter 1 (CPA1) transporter (TC 2.A.36) family. In terms of assembly, homodimer; dimerization is crucial for its function. Oligomer. Interacts with CALM in a calcium-dependent manner. Interacts with TESC. Interacts (via the juxtamembrane region of the cytoplasmic C-terminal domain) with CHP1; the interaction occurs at the plasma membrane in a calcium-dependent manner. Interacts with CHP2; the interaction occurs in a calcium-dependent manner. Interacts with EZR; regulates the cytoskeletal interactions of SLC9A1 and promotes stress fiber formation. Post-translationally, ubiquitinated, leading to its degradation by the proteasome. Ubiquitination is reduced by CHP1. In terms of processing, O-glycosylated. Palmitoylated; may play a major role in SLC9A1 regulation. Post-translationally, phosphorylation at Thr-782 increases SLC9A1 activity. Specifically dephosphorylated at Thr-782 by PPP3CA that negatively regulates SLC9A1 activity. Phosphorylation at Ser-648 by AKT1 reduces SLC9A1 binding to CALM1.

It is found in the cell membrane. It localises to the basolateral cell membrane. The catalysed reaction is Na(+)(in) + H(+)(out) = Na(+)(out) + H(+)(in). The enzyme catalyses Li(+)(out) + H(+)(in) = Li(+)(in) + H(+)(out). It carries out the reaction Li(+)(in) + Na(+)(out) = Li(+)(out) + Na(+)(in). Activated at acidic pHs. Inhibited by cariporide and eniporide. Inhibited by amiloride and 5-amino-substituted derivatives. Phosphatidylinositol 4,5-bisphosphate (PI(4,5)P2) and phosphatidylinositol 3,4,5-trisphosphate (PI(3,4,5)P3) bind and differentially regulate SLC9A1 activity. In terms of biological role, electroneutral Na(+) /H(+) antiporter that extrudes Na(+) in exchange for external protons driven by the inward sodium ion chemical gradient, protecting cells from acidification that occurs from metabolism. Exchanges intracellular H(+) ions for extracellular Na(+) in 1:1 stoichiometry. Plays a key role in maintening intracellular pH neutral and cell volume, and thus is important for cell growth, proliferation, migration and survival. In addition, can transport lithium Li(+) and also functions as a Na(+)/Li(+) antiporter. SLC9A1 also functions in membrane anchoring and organization of scaffolding complexes that coordinate signaling inputs. The chain is Sodium/hydrogen exchanger 1 (SLC9A1) from Sus scrofa (Pig).